Here is a 719-residue protein sequence, read N- to C-terminus: Polyphosphate kinase (719 aa).

Position 47 (asparagine 47) interacts with ATP. Residues arginine 377 and arginine 407 each coordinate Mg(2+). The active-site Phosphohistidine intermediate is the histidine 437. ATP is bound by residues tyrosine 470, arginine 566, and histidine 594.

It belongs to the polyphosphate kinase 1 (PPK1) family. Mg(2+) serves as cofactor. In terms of processing, an intermediate of this reaction is the autophosphorylated ppk in which a phosphate is covalently linked to a histidine residue through a N-P bond.

It catalyses the reaction [phosphate](n) + ATP = [phosphate](n+1) + ADP. Functionally, catalyzes the reversible transfer of the terminal phosphate of ATP to form a long-chain polyphosphate (polyP). This is Polyphosphate kinase from Exiguobacterium sibiricum (strain DSM 17290 / CCUG 55495 / CIP 109462 / JCM 13490 / 255-15).